Here is a 338-residue protein sequence, read N- to C-terminus: Fructose-1,6-bisphosphatase 1 (338 aa).

An N-acetylalanine modification is found at alanine 2. AMP is bound by residues 18–22 and 28–32; these read VMEEG and TGEMT. Residues aspartate 69 and glutamate 98 each coordinate Mg(2+). An AMP-binding site is contributed by 113–114; the sequence is KY. Mg(2+)-binding residues include aspartate 119, leucine 121, and aspartate 122. Residue 122 to 125 participates in substrate binding; the sequence is DGSS. Arginine 141 is a binding site for AMP. Lysine 151 carries the N6-succinyllysine modification. Substrate contacts are provided by residues 213-216, 244-249, tyrosine 265, and 275-277; these read NEGY, RYVGSM, and KLR. A phosphotyrosine mark is found at tyrosine 216, tyrosine 245, and tyrosine 265. Residue glutamate 281 participates in Mg(2+) binding.

Belongs to the FBPase class 1 family. In terms of assembly, homotetramer. Mg(2+) is required as a cofactor.

It catalyses the reaction beta-D-fructose 1,6-bisphosphate + H2O = beta-D-fructose 6-phosphate + phosphate. It functions in the pathway carbohydrate biosynthesis; gluconeogenesis. Its activity is regulated as follows. Subject to complex allosteric regulation. The enzyme can assume an active R-state, or an inactive T-state. Intermediate conformations may exist. AMP acts as an allosteric inhibitor. AMP binding affects the turnover of bound substrate and not the affinity for substrate. Fructose 2,6-bisphosphate acts as a competitive inhibitor. Fructose 2,6-bisphosphate and AMP have synergistic effects. Its function is as follows. Catalyzes the hydrolysis of fructose 1,6-bisphosphate to fructose 6-phosphate in the presence of divalent cations, acting as a rate-limiting enzyme in gluconeogenesis. Plays a role in regulating glucose sensing and insulin secretion of pancreatic beta-cells. Appears to modulate glycerol gluconeogenesis in liver. Important regulator of appetite and adiposity; increased expression of the protein in liver after nutrient excess increases circulating satiety hormones and reduces appetite-stimulating neuropeptides and thus seems to provide a feedback mechanism to limit weight gain. The polypeptide is Fructose-1,6-bisphosphatase 1 (FBP1) (Oryctolagus cuniculus (Rabbit)).